The sequence spans 398 residues: 4-hydroxy-3-methylbut-2-enyl diphosphate reductase (398 aa).

Cys66 serves as a coordination point for [4Fe-4S] cluster. His96 contacts (2E)-4-hydroxy-3-methylbut-2-enyl diphosphate. Dimethylallyl diphosphate is bound at residue His96. Position 96 (His96) interacts with isopentenyl diphosphate. Residue Cys157 coordinates [4Fe-4S] cluster. (2E)-4-hydroxy-3-methylbut-2-enyl diphosphate is bound at residue His185. His185 is a dimethylallyl diphosphate binding site. Residue His185 coordinates isopentenyl diphosphate. The active-site Proton donor is Glu187. Thr250 serves as a coordination point for (2E)-4-hydroxy-3-methylbut-2-enyl diphosphate. Residue Cys288 participates in [4Fe-4S] cluster binding. (2E)-4-hydroxy-3-methylbut-2-enyl diphosphate contacts are provided by Ser317, Ser318, Asn319, and Ser380. Dimethylallyl diphosphate-binding residues include Ser317, Ser318, Asn319, and Ser380. Isopentenyl diphosphate is bound by residues Ser317, Ser318, Asn319, and Ser380.

It belongs to the IspH family. It depends on [4Fe-4S] cluster as a cofactor.

It carries out the reaction isopentenyl diphosphate + 2 oxidized [2Fe-2S]-[ferredoxin] + H2O = (2E)-4-hydroxy-3-methylbut-2-enyl diphosphate + 2 reduced [2Fe-2S]-[ferredoxin] + 2 H(+). It catalyses the reaction dimethylallyl diphosphate + 2 oxidized [2Fe-2S]-[ferredoxin] + H2O = (2E)-4-hydroxy-3-methylbut-2-enyl diphosphate + 2 reduced [2Fe-2S]-[ferredoxin] + 2 H(+). It functions in the pathway isoprenoid biosynthesis; dimethylallyl diphosphate biosynthesis; dimethylallyl diphosphate from (2E)-4-hydroxy-3-methylbutenyl diphosphate: step 1/1. The protein operates within isoprenoid biosynthesis; isopentenyl diphosphate biosynthesis via DXP pathway; isopentenyl diphosphate from 1-deoxy-D-xylulose 5-phosphate: step 6/6. In terms of biological role, catalyzes the conversion of 1-hydroxy-2-methyl-2-(E)-butenyl 4-diphosphate (HMBPP) into a mixture of isopentenyl diphosphate (IPP) and dimethylallyl diphosphate (DMAPP). Acts in the terminal step of the DOXP/MEP pathway for isoprenoid precursor biosynthesis. This chain is 4-hydroxy-3-methylbut-2-enyl diphosphate reductase, found in Prochlorococcus marinus (strain MIT 9515).